Here is a 679-residue protein sequence, read N- to C-terminus: Patatin-like phospholipase 1 (679 aa).

Disordered stretches follow at residues 19–45 (FSDD…NAEN) and 155–194 (GEYE…NYNS). 2 stretches are compositionally biased toward polar residues: residues 35–45 (YSGSETQNAEN) and 162–176 (TSSY…NTVG). The span at 177 to 188 (SEKEETENKNEE) shows a compositional bias: basic and acidic residues. A PNPLA domain is found at 338–544 (LSLDGGGILT…KASNPALIAL (207 aa)). The short motif at 381 to 385 (GTSAG) is the GXSXG element. Ser-383 serves as the catalytic Nucleophile. The active-site Proton acceptor is the Asp-531. A DGA/G motif is present at residues 531 to 533 (DGA).

Belongs to the patatin family.

It localises to the cytoplasm. It catalyses the reaction a 1,2-diacyl-sn-glycero-3-phosphocholine + H2O = a 1-acyl-sn-glycero-3-phosphocholine + a fatty acid + H(+). The enzyme catalyses 1,2-dihexadecanoyl-sn-glycero-3-phosphocholine + H2O = 1-hexadecanoyl-sn-glycero-3-phosphocholine + hexadecanoate + H(+). Hydrolyzes the ester bond of the fatty acyl group attached at the sn-2 position of phospholipids such as phosphatidylcholine. Involved in gametogenesis; however, it is not clear whether it is involved in gametocytes development in host erythrocytes or in gametocyte activation in the mosquito midgut. Involved in gametocyte development in host erythrocytes; however, not involved in gametocytes activation including male gamete exflagellation. Involved in the rounding up of gametocytes following activation in the mosquito midgut; however, not required for gametocyte development in host erythrocytes. Required for exflagellation of activated male gametocytes. Involved in gametocytes egress from host erythrocytes by promoting the relocalization of perforin-like protein PLP2-containing vesicles to the periphery of gametocytes; PLP2 secretion is required for permeabilization of the erythrocyte membrane and thus, promotes gametocyte egress. Dispensable for asexual blood stage development. In Plasmodium falciparum (isolate NF54), this protein is Patatin-like phospholipase 1.